A 194-amino-acid chain; its full sequence is MSKSMYGYVRDAWKKPAESGVKKLLWERMQTWRRQGAVVRLERPTRIDRARELGYKAKQGIIVVRASIRRGGRRKSRYIRGRRTNRMGMRKATPGKNLQSIAEERAATRYPNMEVLNSYWVGQDGKSKYYEVILVDRNSPSVLADKNLAWVADTRGRVFRGKTSAGRRARGLHNRGTGTEKCRPSLTSHKNQGK.

Residues 162–173 (KTSAGRRARGLH) show a composition bias toward basic residues. A disordered region spans residues 162–194 (KTSAGRRARGLHNRGTGTEKCRPSLTSHKNQGK). The span at 185–194 (SLTSHKNQGK) shows a compositional bias: polar residues.

It belongs to the eukaryotic ribosomal protein eL15 family.

The sequence is that of Large ribosomal subunit protein eL15 from Methanocorpusculum labreanum (strain ATCC 43576 / DSM 4855 / Z).